A 248-amino-acid chain; its full sequence is 2,3-bisphosphoglycerate-dependent phosphoglycerate mutase (248 aa).

Residues 8 to 15, 21 to 22, Arg60, 87 to 90, Lys98, 114 to 115, and 183 to 184 each bind substrate; these read RHGESEWN, TG, ERHY, RR, and GN. His9 (tele-phosphohistidine intermediate) is an active-site residue. The active-site Proton donor/acceptor is Glu87.

It belongs to the phosphoglycerate mutase family. BPG-dependent PGAM subfamily.

It catalyses the reaction (2R)-2-phosphoglycerate = (2R)-3-phosphoglycerate. It participates in carbohydrate degradation; glycolysis; pyruvate from D-glyceraldehyde 3-phosphate: step 3/5. Functionally, catalyzes the interconversion of 2-phosphoglycerate and 3-phosphoglycerate. This Borreliella burgdorferi (strain ATCC 35210 / DSM 4680 / CIP 102532 / B31) (Borrelia burgdorferi) protein is 2,3-bisphosphoglycerate-dependent phosphoglycerate mutase.